A 125-amino-acid polypeptide reads, in one-letter code: Large ribosomal subunit protein bL12 (125 aa).

This sequence belongs to the bacterial ribosomal protein bL12 family. In terms of assembly, homodimer. Part of the ribosomal stalk of the 50S ribosomal subunit. Forms a multimeric L10(L12)X complex, where L10 forms an elongated spine to which 2 to 4 L12 dimers bind in a sequential fashion. Binds GTP-bound translation factors.

In terms of biological role, forms part of the ribosomal stalk which helps the ribosome interact with GTP-bound translation factors. Is thus essential for accurate translation. This chain is Large ribosomal subunit protein bL12, found in Rickettsia typhi (strain ATCC VR-144 / Wilmington).